The primary structure comprises 248 residues: Adenosylcobinamide-GDP ribazoletransferase (248 aa).

Transmembrane regions (helical) follow at residues 36-56 (FFLPVVASIIGGMEFLIYLGL), 59-79 (FLPPNVIIVLLLLFTAMITGG), 113-133 (FGTIAMIINLLLKYQLLYSLV), 137-157 (CSIAIILAPVIGRISILFLCL), 170-190 (IFIGNMSKPIIFLITIIALAM), and 199-219 (ITIISFTAVLIITYLFYLLCL).

This sequence belongs to the CobS family. Mg(2+) is required as a cofactor.

The protein localises to the cell membrane. The catalysed reaction is alpha-ribazole + adenosylcob(III)inamide-GDP = adenosylcob(III)alamin + GMP + H(+). The enzyme catalyses alpha-ribazole 5'-phosphate + adenosylcob(III)inamide-GDP = adenosylcob(III)alamin 5'-phosphate + GMP + H(+). It participates in cofactor biosynthesis; adenosylcobalamin biosynthesis; adenosylcobalamin from cob(II)yrinate a,c-diamide: step 7/7. Functionally, joins adenosylcobinamide-GDP and alpha-ribazole to generate adenosylcobalamin (Ado-cobalamin). Also synthesizes adenosylcobalamin 5'-phosphate from adenosylcobinamide-GDP and alpha-ribazole 5'-phosphate. The sequence is that of Adenosylcobinamide-GDP ribazoletransferase from Clostridium botulinum (strain 657 / Type Ba4).